A 174-amino-acid chain; its full sequence is RNA pyrophosphohydrolase (174 aa).

The 144-residue stretch at glycine 6 to lysine 149 folds into the Nudix hydrolase domain. A Nudix box motif is present at residues glycine 38 to glycine 59.

This sequence belongs to the Nudix hydrolase family. RppH subfamily. A divalent metal cation is required as a cofactor.

Its function is as follows. Accelerates the degradation of transcripts by removing pyrophosphate from the 5'-end of triphosphorylated RNA, leading to a more labile monophosphorylated state that can stimulate subsequent ribonuclease cleavage. In Shewanella loihica (strain ATCC BAA-1088 / PV-4), this protein is RNA pyrophosphohydrolase.